The primary structure comprises 125 residues: MRHRNSGVKLGRTSSHRKAMFQNLANSLFEHELIKTTLPKAKELRRVAEPLITLAKNDTVANRRLAFARTRNAATVGKLFTVLGPRYKERNGGYLRVLKAGFRAGDAAPMAYVELVDREVNTSAE.

Belongs to the bacterial ribosomal protein bL17 family. As to quaternary structure, part of the 50S ribosomal subunit. Contacts protein L32.

This chain is Large ribosomal subunit protein bL17, found in Acinetobacter baumannii (strain AB307-0294).